Here is a 121-residue protein sequence, read N- to C-terminus: MDYRFGRQYRLLKTDDFSSVFAFRNRRSRDLLQVSRSNGNGLGHPRIGLVVGKKTAKRANERNYMKRVIRDWFRLNKNRLPPQDFVVRVHRKFDRATAKQARAELAQLMFGNPATGCRKQA.

It belongs to the RnpA family. Consists of a catalytic RNA component (M1 or rnpB) and a protein subunit.

The enzyme catalyses Endonucleolytic cleavage of RNA, removing 5'-extranucleotides from tRNA precursor.. Functionally, RNaseP catalyzes the removal of the 5'-leader sequence from pre-tRNA to produce the mature 5'-terminus. It can also cleave other RNA substrates such as 4.5S RNA. The protein component plays an auxiliary but essential role in vivo by binding to the 5'-leader sequence and broadening the substrate specificity of the ribozyme. The chain is Ribonuclease P protein component from Neisseria meningitidis serogroup B (strain ATCC BAA-335 / MC58).